A 395-amino-acid chain; its full sequence is Elongation factor Tu (395 aa).

The region spanning 10 to 205 is the tr-type G domain; sequence KPHVNIGTIG…VDNWIPIPPR (196 aa). The segment at 19 to 26 is G1; that stretch reads GHVDHGKT. 19-26 serves as a coordination point for GTP; the sequence is GHVDHGKT. Mg(2+) is bound at residue threonine 26. The segment at 60 to 64 is G2; it reads GITIN. Positions 81–84 are G3; that stretch reads DCPG. Residues 81–85 and 136–139 contribute to the GTP site; these read DCPGH and NKVD. Residues 136 to 139 form a G4 region; that stretch reads NKVD. The interval 174 to 176 is G5; sequence SAL.

Belongs to the TRAFAC class translation factor GTPase superfamily. Classic translation factor GTPase family. EF-Tu/EF-1A subfamily. Monomer.

The protein resides in the cytoplasm. The enzyme catalyses GTP + H2O = GDP + phosphate + H(+). GTP hydrolase that promotes the GTP-dependent binding of aminoacyl-tRNA to the A-site of ribosomes during protein biosynthesis. The protein is Elongation factor Tu of Hymenobacter ocellatus (Parahymenobacter ocellatus).